We begin with the raw amino-acid sequence, 409 residues long: uncharacterized protein (409 aa).

Positions 1–26 (MKKELLASLVLCLSLSPLVSTNEVFA) are cleaved as a signal peptide.

This is an uncharacterized protein from Bacillus subtilis (strain 168).